A 761-amino-acid chain; its full sequence is T-box protein 1 (761 aa).

2 disordered regions span residues 1–85 and 167–210; these read MLGR…QPLT and QTDP…CSSP. Composition is skewed to polar residues over residues 37–61 and 167–179; these read DLQN…NQAG and QTDP…FPQA. Low complexity-rich tracts occupy residues 180-191 and 198-210; these read SPSDLSTTSSQS and SSPS…CSSP. Residues 287–456 constitute a DNA-binding region (T-box); it reads LWRKFHEHRT…HNPFAKGFRD (170 aa). Positions 496–510 are enriched in polar residues; sequence TTGFPCQTNPTQRSN. Disordered stretches follow at residues 496-515, 545-612, and 637-687; these read TTGF…QHEG, SGDA…TPAH, and VCSS…LLTT. Positions 600 to 612 are enriched in basic and acidic residues; it reads GCERSNEKHTPAH. Polar residues predominate over residues 637–646; sequence VCSSDNSNPD. A compositionally biased stretch (low complexity) spans 656-687; the sequence is SPAGSGSPSVTSGTSLFTSGSSAAPSPPLLTT.

It is found in the nucleus. Probable transcriptional regulator involved in developmental processes. The protein is T-box protein 1 (tbr1) of Patiria pectinifera (Starfish).